A 318-amino-acid chain; its full sequence is NADH-ubiquinone oxidoreductase chain 1 (318 aa).

The next 8 helical transmembrane spans lie at Phe2–Leu22, Ile68–Pro88, Leu100–Gly120, Leu146–Ile166, His171–Ala191, Leu222–Phe242, Glu253–Val273, and Leu294–Ile314.

The protein belongs to the complex I subunit 1 family.

Its subcellular location is the mitochondrion inner membrane. The enzyme catalyses a ubiquinone + NADH + 5 H(+)(in) = a ubiquinol + NAD(+) + 4 H(+)(out). In terms of biological role, core subunit of the mitochondrial membrane respiratory chain NADH dehydrogenase (Complex I) that is believed to belong to the minimal assembly required for catalysis. Complex I functions in the transfer of electrons from NADH to the respiratory chain. The immediate electron acceptor for the enzyme is believed to be ubiquinone. This is NADH-ubiquinone oxidoreductase chain 1 (MT-ND1) from Coelops frithii (East Asian tailless leaf-nosed bat).